A 236-amino-acid polypeptide reads, in one-letter code: Small ribosomal subunit protein uS5 (236 aa).

One can recognise an S5 DRBM domain in the interval 61–124 (ENQEIIDIAL…NYAKLNIIEI (64 aa)).

It belongs to the universal ribosomal protein uS5 family. Part of the 30S ribosomal subunit. Contacts protein S4.

With S4 and S12 plays an important role in translational accuracy. This chain is Small ribosomal subunit protein uS5, found in Pyrococcus horikoshii (strain ATCC 700860 / DSM 12428 / JCM 9974 / NBRC 100139 / OT-3).